A 149-amino-acid polypeptide reads, in one-letter code: Large ribosomal subunit protein uL15 (149 aa).

The segment covering 1–28 (MVIKIHDLRPAPGSKRDKIRVGRGEGSK) has biased composition (basic and acidic residues). The interval 1–54 (MVIKIHDLRPAPGSKRDKIRVGRGEGSKGKTAGRGTKGTKARKNVSPRFEGGQM) is disordered.

The protein belongs to the universal ribosomal protein uL15 family. As to quaternary structure, part of the 50S ribosomal subunit.

In terms of biological role, binds to the 23S rRNA. The protein is Large ribosomal subunit protein uL15 of Saccharopolyspora erythraea (strain ATCC 11635 / DSM 40517 / JCM 4748 / NBRC 13426 / NCIMB 8594 / NRRL 2338).